Reading from the N-terminus, the 107-residue chain is Iron-sulfur cluster assembly protein CyaY (107 aa).

Belongs to the frataxin family.

Functionally, involved in iron-sulfur (Fe-S) cluster assembly. May act as a regulator of Fe-S biogenesis. This chain is Iron-sulfur cluster assembly protein CyaY, found in Yersinia intermedia.